The chain runs to 443 residues: Proline--tRNA ligase (443 aa).

The protein belongs to the class-II aminoacyl-tRNA synthetase family. ProS type 2 subfamily. Homodimer.

Its subcellular location is the cytoplasm. It catalyses the reaction tRNA(Pro) + L-proline + ATP = L-prolyl-tRNA(Pro) + AMP + diphosphate. Functionally, catalyzes the attachment of proline to tRNA(Pro) in a two-step reaction: proline is first activated by ATP to form Pro-AMP and then transferred to the acceptor end of tRNA(Pro). The protein is Proline--tRNA ligase of Zymomonas mobilis subsp. mobilis (strain ATCC 10988 / DSM 424 / LMG 404 / NCIMB 8938 / NRRL B-806 / ZM1).